Consider the following 490-residue polypeptide: Type I restriction enzyme EcoEI methylase subunit (490 aa).

Residues 163 to 168, 193 to 195, and Glu226 contribute to the S-adenosyl-L-methionine site; these read EFYTPR and TGG.

Belongs to the N(4)/N(6)-methyltransferase family. In terms of assembly, the type I restriction/modification system is composed of three polypeptides R, M and S; the restriction enzyme has stoichiometry R(2)M(2)S(1) while the methyltransferase is M(2)S(1).

It carries out the reaction a 2'-deoxyadenosine in DNA + S-adenosyl-L-methionine = an N(6)-methyl-2'-deoxyadenosine in DNA + S-adenosyl-L-homocysteine + H(+). The subtype gamma methyltransferase (M) subunit of a type I restriction enzyme. The M and S subunits together form a methyltransferase (MTase) that methylates two adenine residues of the sequence 5'-GAGN(7)ATGC-3'. In the presence of the R subunit the complex can also act as an endonuclease, binding to the same target sequence but cutting the DNA some distance from this site. Whether the DNA is cut or modified depends on the methylation state of the target sequence. When the target site is unmodified, the DNA is cut. When the target site is hemimethylated, the complex acts as a maintenance MTase modifying the DNA so that both strands become methylated. After locating a non-methylated recognition site, the enzyme complex serves as a molecular motor that translocates DNA in an ATP-dependent manner until a collision occurs that triggers cleavage. In Escherichia coli, this protein is Type I restriction enzyme EcoEI methylase subunit (hsdM).